The chain runs to 2287 residues: Protein Ycf2 (2287 aa).

1641–1648 (GSIGTGRS) contacts ATP.

Belongs to the Ycf2 family.

It is found in the plastid. The protein localises to the chloroplast stroma. Probable ATPase of unknown function. Its presence in a non-photosynthetic plant (Epifagus virginiana) and experiments in tobacco indicate that it has an essential function which is probably not related to photosynthesis. The polypeptide is Protein Ycf2 (Lepidium virginicum (Virginia pepperweed)).